Here is a 580-residue protein sequence, read N- to C-terminus: 2-succinyl-5-enolpyruvyl-6-hydroxy-3-cyclohexene-1-carboxylate synthase (580 aa).

A disordered region spans residues 178–199; the sequence is LEPTPMPGDLTEPPAAAQPRDD.

This sequence belongs to the TPP enzyme family. MenD subfamily. As to quaternary structure, homodimer. The cofactor is Mg(2+). Mn(2+) is required as a cofactor. Requires thiamine diphosphate as cofactor.

It carries out the reaction isochorismate + 2-oxoglutarate + H(+) = 5-enolpyruvoyl-6-hydroxy-2-succinyl-cyclohex-3-ene-1-carboxylate + CO2. It participates in quinol/quinone metabolism; 1,4-dihydroxy-2-naphthoate biosynthesis; 1,4-dihydroxy-2-naphthoate from chorismate: step 2/7. Its pathway is quinol/quinone metabolism; menaquinone biosynthesis. Functionally, catalyzes the thiamine diphosphate-dependent decarboxylation of 2-oxoglutarate and the subsequent addition of the resulting succinic semialdehyde-thiamine pyrophosphate anion to isochorismate to yield 2-succinyl-5-enolpyruvyl-6-hydroxy-3-cyclohexene-1-carboxylate (SEPHCHC). The polypeptide is 2-succinyl-5-enolpyruvyl-6-hydroxy-3-cyclohexene-1-carboxylate synthase (Roseiflexus castenholzii (strain DSM 13941 / HLO8)).